The sequence spans 788 residues: Calpastatin (788 aa).

Pro residues predominate over residues 1 to 11 (MSQPGPKPAAS). 3 disordered regions span residues 1-262 (MSQP…TGPV), 289-493 (LLEK…MCSI), and 514-580 (TLAG…SQEQ). Position 11 is a phosphoserine (serine 11). Low complexity predominate over residues 12–21 (PRPSRGAAAR). Basic and acidic residues predominate over residues 38–49 (PGEKKGSDEKKA). Residues 65 to 87 (AATATKVTASSAATSKSPSMSTT) show a composition bias toward low complexity. Over residues 99–119 (EGPDQKRPREQAVKTESKKPQ) the composition is skewed to basic and acidic residues. Lysine 112 participates in a covalent cross-link: Glycyl lysine isopeptide (Lys-Gly) (interchain with G-Cter in SUMO2). An N6-acetyllysine modification is found at lysine 129. Serine 165 carries the post-translational modification Phosphoserine. Threonine 216 bears the Phosphothreonine mark. Phosphoserine is present on serine 219. The span at 246–256 (GGHEDTNRDDP) shows a compositional bias: basic and acidic residues. One copy of the Inhibitory domain 1 repeat lies at 251–303 (TNRDDPPYTGPVVLDPMYSTYLEALGIKEGTIPPEYRKLLEKNEGITQPLPDS). 2 positions are modified to phosphoserine: serine 303 and serine 324. Composition is skewed to polar residues over residues 318-328 (SDFTCSSPTGK) and 369-380 (QALQALSDSLGT). Residues 384–436 (DPPSHVSQAEQVKEAKAKEERQEKCGEDEDTVPAEYRLKPAKDKDGKPLLPEP) form an Inhibitory domain 2 repeat. Composition is skewed to basic and acidic residues over residues 394–408 (QVKE…QEKC) and 419–430 (YRLKPAKDKDGK). The segment covering 441-453 (KSLSESELIGELS) has biased composition (low complexity). Phosphoserine is present on residues serine 444, serine 446, and serine 453. A Phosphothreonine modification is found at threonine 479. Position 518 is a phosphoserine (serine 518). Residues 522-570 (READPEHEKTVEDKVKEKAKEEEHEKLGEKEETVPPDYRLEEVKDKDGK) show a composition bias toward basic and acidic residues. The stretch at 524-577 (ADPEHEKTVEDKVKEKAKEEEHEKLGEKEETVPPDYRLEEVKDKDGKPLLPKES) is one Inhibitory domain 3 repeat. Residues serine 594, serine 605, serine 653, and serine 655 each carry the phosphoserine modification. The disordered stretch occupies residues 620 to 788 (VVSQTPAPST…PKAKEDARHS (169 aa)). The Inhibitory domain 4 repeat unit spans residues 661 to 714 (PDPDENKPLDDKVKEKIKPEHSEKLGERDDTIPPEYRHLLDNDGKDKPEKPPTK). Composition is skewed to basic and acidic residues over residues 661–726 (PDPD…RDPI) and 759–788 (ASKD…ARHS).

This sequence belongs to the protease inhibitor I27 (calpastatin) family. Isoform 2 is the major form in all tissues examined. Isoform 1 accounts for 5-10% in tissues such as skeletal muscle, liver and brain, and 30% in myoblasts. Isoforms 4 and 5 are testis-specific. Isoform 6 is highly expressed in heart and skeletal muscle with lower levels in liver, brain and testis. Isoform 7 is expressed at high levels in liver.

Functionally, specific inhibition of calpain (calcium-dependent cysteine protease). Plays a key role in postmortem tenderization of meat and have been proposed to be involved in muscle protein degradation in living tissue. The sequence is that of Calpastatin (Cast) from Mus musculus (Mouse).